The chain runs to 548 residues: uncharacterized protein (548 aa).

Phosphoserine is present on residues Ser19 and Ser25. Thr47 carries the post-translational modification Phosphothreonine.

This is an uncharacterized protein from Schizosaccharomyces pombe (strain 972 / ATCC 24843) (Fission yeast).